The sequence spans 89 residues: Large ribosomal subunit protein bL28 (89 aa).

Belongs to the bacterial ribosomal protein bL28 family.

This is Large ribosomal subunit protein bL28 from Chlamydia abortus (strain DSM 27085 / S26/3) (Chlamydophila abortus).